Consider the following 158-residue polypeptide: Endoribonuclease YbeY (158 aa).

Zn(2+)-binding residues include H119, H123, and D129.

Belongs to the endoribonuclease YbeY family. The cofactor is Zn(2+).

The protein localises to the cytoplasm. In terms of biological role, single strand-specific metallo-endoribonuclease involved in late-stage 70S ribosome quality control and in maturation of the 3' terminus of the 16S rRNA. In Chlamydia pneumoniae (Chlamydophila pneumoniae), this protein is Endoribonuclease YbeY.